Here is a 320-residue protein sequence, read N- to C-terminus: o-succinylbenzoate synthase (320 aa).

The Proton donor role is filled by lysine 133. Aspartate 161, glutamate 190, and aspartate 213 together coordinate Mg(2+). Residue lysine 235 is the Proton acceptor of the active site.

The protein belongs to the mandelate racemase/muconate lactonizing enzyme family. MenC type 1 subfamily. A divalent metal cation serves as cofactor.

The enzyme catalyses (1R,6R)-6-hydroxy-2-succinyl-cyclohexa-2,4-diene-1-carboxylate = 2-succinylbenzoate + H2O. It participates in quinol/quinone metabolism; 1,4-dihydroxy-2-naphthoate biosynthesis; 1,4-dihydroxy-2-naphthoate from chorismate: step 4/7. Its pathway is quinol/quinone metabolism; menaquinone biosynthesis. In terms of biological role, converts 2-succinyl-6-hydroxy-2,4-cyclohexadiene-1-carboxylate (SHCHC) to 2-succinylbenzoate (OSB). The sequence is that of o-succinylbenzoate synthase from Salmonella heidelberg (strain SL476).